Here is a 422-residue protein sequence, read N- to C-terminus: Ubiquitin-conjugating enzyme E2 Q1 (422 aa).

An N-acetylmethionine modification is found at M1. The segment covering M1–A24 has biased composition (low complexity). 2 disordered regions span residues M1 to C40 and Q173 to G221. Residues P25–P35 are compositionally biased toward gly residues. A compositionally biased stretch (acidic residues) spans V185–D200. The segment covering A212 to G221 has biased composition (basic and acidic residues). The region spanning Q251 to Y415 is the UBC core domain. C351 functions as the Glycyl thioester intermediate in the catalytic mechanism.

The protein belongs to the ubiquitin-conjugating enzyme family. Monomer and homodimer. Only the homodimer is linked to ubiquitin through thiolester activation. Interacts (via N-terminus) with B4GALT1 (via N-terminal cytoplasmic domain); the interaction is direct. In terms of processing, autoubiquitinated in vitro in the presence of NEDD4L. Expressed in liver, brain, heart, spleen, lung, kidney, muscle, ovary, epididymis, testis and placenta. Also expressed in thymus and ES cells. Only expressed in the uterus during pregnancy. Expressed in oocytes and during subsequent embryonic development stages (4-cell stage, blastocyst, 8.5 dpc, 13.5 dpc, 16.5 dpc and 18.5 dpc).

Its subcellular location is the nucleus. It is found in the cell projection. The protein resides in the filopodium. It localises to the cytoplasm. The protein localises to the cytosol. It catalyses the reaction S-ubiquitinyl-[E1 ubiquitin-activating enzyme]-L-cysteine + [E2 ubiquitin-conjugating enzyme]-L-cysteine = [E1 ubiquitin-activating enzyme]-L-cysteine + S-ubiquitinyl-[E2 ubiquitin-conjugating enzyme]-L-cysteine.. The protein operates within protein modification; protein ubiquitination. Its function is as follows. Catalyzes the covalent attachment of ubiquitin to other proteins. Involved in female fertility and embryo implantation. May be involved in hormonal homeostasis in females. Involved in regulation of B4GALT1 cell surface expression, B4GALT1-mediated cell adhesion to laminin and embryoid body formation. In Mus musculus (Mouse), this protein is Ubiquitin-conjugating enzyme E2 Q1 (Ube2q1).